A 512-amino-acid chain; its full sequence is Cobyric acid synthase (512 aa).

A GATase cobBQ-type domain is found at 262–442; the sequence is WLRVAAIRLP…WHGLLETDRF (181 aa). Cysteine 343 serves as the catalytic Nucleophile. The active site involves histidine 434.

The protein belongs to the CobB/CobQ family. CobQ subfamily.

The protein operates within cofactor biosynthesis; adenosylcobalamin biosynthesis. Catalyzes amidations at positions B, D, E, and G on adenosylcobyrinic A,C-diamide. NH(2) groups are provided by glutamine, and one molecule of ATP is hydrogenolyzed for each amidation. The chain is Cobyric acid synthase from Rhodococcus jostii (strain RHA1).